Reading from the N-terminus, the 172-residue chain is uncharacterized protein (172 aa).

Helical transmembrane passes span 16 to 36 (IMIVIAIIITIGSFLFIAYLI), 68 to 88 (SFLIISLLCFYFGMLYIAGEL), and 89 to 109 (VISHILFIAICWIVVFLYIII).

Its subcellular location is the cell membrane. This is an uncharacterized protein from Methanocaldococcus jannaschii (strain ATCC 43067 / DSM 2661 / JAL-1 / JCM 10045 / NBRC 100440) (Methanococcus jannaschii).